Consider the following 96-residue polypeptide: Small ribosomal subunit protein bS6 (96 aa).

Belongs to the bacterial ribosomal protein bS6 family.

Binds together with bS18 to 16S ribosomal RNA. The polypeptide is Small ribosomal subunit protein bS6 (Streptococcus pneumoniae serotype 2 (strain D39 / NCTC 7466)).